The primary structure comprises 438 residues: DEAD-box ATP-dependent RNA helicase CshB (438 aa).

Residues 4 to 32 (TKFELYELKPFIIDAVHRLGFYEPTDIQK) carry the Q motif motif. The Helicase ATP-binding domain maps to 35–208 (IPAVLKKESV…KKYMENPKYA (174 aa)). 48–55 (SQTGTGKT) serves as a coordination point for ATP. A DEAD box motif is present at residues 156–159 (DEAD). The 151-residue stretch at 235-385 (LLFDIMSHLN…EWKKGDDRQR (151 aa)) folds into the Helicase C-terminal domain. A disordered region spans residues 380-438 (GDDRQRRKKRKKTPNEADEIAHRLVKKPKKVKPGYKKKMSYEMEKIKKKQRRNQSKKRK). Residues 392-401 (TPNEADEIAH) are compositionally biased toward basic and acidic residues. Basic residues-rich tracts occupy residues 402 to 417 (RLVK…YKKK) and 425 to 438 (IKKK…KKRK).

This sequence belongs to the DEAD box helicase family. In terms of assembly, interacts with CspB when cells are transcriptionally active. May interact with RNA helicases CshA and DbpA (DeaD), may be a component of a possible RNA degradosome complex composed of rny, rnja, rnjb, pnp, pfkA and eno (although rnjA and rnjB's presence is unclear). Specifically interacts with pnp and rny.

It is found in the cytoplasm. The protein resides in the nucleoid. It carries out the reaction ATP + H2O = ADP + phosphate + H(+). Functionally, DEAD-box RNA helicase that plays a role in 70S ribosome assembly. May work in conjunction with the cold shock proteins to ensure proper initiation of transcription at low and optimal temperatures. The chain is DEAD-box ATP-dependent RNA helicase CshB from Bacillus subtilis (strain 168).